The primary structure comprises 324 residues: Quinolinate synthase (324 aa).

The iminosuccinate site is built by H44 and S62. C107 contacts [4Fe-4S] cluster. Iminosuccinate contacts are provided by residues 133–135 and S150; that span reads YVN. C192 is a binding site for [4Fe-4S] cluster. Iminosuccinate contacts are provided by residues 218-220 and T235; that span reads HPE. C278 serves as a coordination point for [4Fe-4S] cluster.

This sequence belongs to the quinolinate synthase family. Type 2 subfamily. [4Fe-4S] cluster serves as cofactor.

It is found in the cytoplasm. The catalysed reaction is iminosuccinate + dihydroxyacetone phosphate = quinolinate + phosphate + 2 H2O + H(+). It functions in the pathway cofactor biosynthesis; NAD(+) biosynthesis; quinolinate from iminoaspartate: step 1/1. In terms of biological role, catalyzes the condensation of iminoaspartate with dihydroxyacetone phosphate to form quinolinate. This Leptospira interrogans serogroup Icterohaemorrhagiae serovar copenhageni (strain Fiocruz L1-130) protein is Quinolinate synthase.